The primary structure comprises 877 residues: Leucine--tRNA ligase (877 aa).

A 'HIGH' region motif is present at residues Pro43–His53. The short motif at Lys628–Ser632 is the 'KMSKS' region element. Lys631 is an ATP binding site.

The protein belongs to the class-I aminoacyl-tRNA synthetase family.

The protein resides in the cytoplasm. The enzyme catalyses tRNA(Leu) + L-leucine + ATP = L-leucyl-tRNA(Leu) + AMP + diphosphate. This is Leucine--tRNA ligase from Brucella melitensis biotype 2 (strain ATCC 23457).